The primary structure comprises 558 residues: Putative cation/proton antiporter YbaL (558 aa).

Residues 1–3 (MHH) are Periplasmic-facing. A helical membrane pass occupies residues 4–24 (ATPLITTIVGGLVLAFILGML). Over 25–31 (ANKLRIS) the chain is Cytoplasmic. A helical transmembrane segment spans residues 32–52 (PLVGYLLAGVLAGPFTPGFVA). Residues 53-55 (DTK) are Periplasmic-facing. The helical transmembrane segment at 56–76 (LAPELAELGVILLMFGVGLHF) threads the bilayer. Residues 77-85 (SLKDLMAVK) lie on the Cytoplasmic side of the membrane. A helical membrane pass occupies residues 86–106 (AIAIPGAIAQIAVATLLGMAL). Topologically, residues 107–112 (SAVLGW) are periplasmic. Residues 113 to 133 (SLMTGIVFGLCLSTASTVVLL) traverse the membrane as a helical segment. Over 134-148 (RALEERQLIDSQRGQ) the chain is Cytoplasmic. Residues 149–169 (IAIGWLIVEDLVMVLTLVLLP) traverse the membrane as a helical segment. At 170 to 185 (AVAGMMEQGDVGFATL) the chain is on the periplasmic side. The chain crosses the membrane as a helical span at residues 186-206 (AVDMGITIGKVIAFIAIMMLV). Residues 207–225 (GRRLVPWIMARSAATGSRE) lie on the Cytoplasmic side of the membrane. Residues 226 to 246 (LFTLSVLALALGVAFGAVELF) form a helical membrane-spanning segment. Residue Asp247 is a topological domain, periplasmic. The chain crosses the membrane as a helical span at residues 248 to 268 (VSFALGAFFAGMVLNESELSH). The Cytoplasmic portion of the chain corresponds to 269-279 (RAAHDTLPLRD). A helical membrane pass occupies residues 280–300 (AFAVLFFVSVGMLFDPLILIQ). At 301-303 (QPL) the chain is on the periplasmic side. The helical transmembrane segment at 304–324 (AVLATLAIILFGKSLAAFFLV) threads the bilayer. The Cytoplasmic portion of the chain corresponds to 325 to 336 (RLFGHSQRTALT). Residues 337-357 (IAASLAQIGEFAFILAGLGMA) form a helical membrane-spanning segment. The Periplasmic segment spans residues 358-367 (LNLLPQAGQN). A helical membrane pass occupies residues 368–388 (LVLAGAILSIMLNPVLFALLE). Topologically, residues 389 to 558 (KYLAKTETLE…TPPAGEVVTG (170 aa)) are cytoplasmic. Positions 417–534 (CNHALLVGYG…TERGANQVVM (118 aa)) constitute an RCK N-terminal domain. AMP-binding positions include 427-428 (RV), 447-448 (ET), 467-468 (NA), Glu494, and Arg514.

It belongs to the monovalent cation:proton antiporter 2 (CPA2) transporter (TC 2.A.37) family.

Its subcellular location is the cell inner membrane. In Escherichia coli (strain K12), this protein is Putative cation/proton antiporter YbaL (ybaL).